A 100-amino-acid polypeptide reads, in one-letter code: RxLR effector protein PITG_18683 (100 aa).

Positions 1–22 are cleaved as a signal peptide; the sequence is MRSFLYGILAFAVLARSSAVAA. The RxLR-dEER signature appears at 43–57; that stretch reads RSLRVEAQEVIQSGR. A Calmodulin-binding motif motif is present at residues 78-82; sequence KPDIK.

Belongs to the RxLR effector family. Interacts with the host calmodulin.

It is found in the secreted. It localises to the host cell. Functionally, secreted effector that associates with calmodulin to interfere with plant defense-associated calcium signaling in hosts. The polypeptide is RxLR effector protein PITG_18683 (Phytophthora infestans (strain T30-4) (Potato late blight agent)).